The sequence spans 495 residues: DDB1- and CUL4-associated factor 4 (495 aa).

Residues 1 to 17 (MNKSRWQSRRRHGRRSH) show a composition bias toward basic residues. The tract at residues 1-66 (MNKSRWQSRR…TAGTSSVPEL (66 aa)) is disordered. The segment covering 24–34 (RLRDSEDRSDS) has biased composition (basic and acidic residues). Residues 51-62 (PSTSSGTAGTSS) show a composition bias toward low complexity. 2 WD repeats span residues 368-407 (FHDS…CVRQ) and 410-451 (GHVN…LLRT).

Interacts with DDB1 and CUL4A.

It functions in the pathway protein modification; protein ubiquitination. Functionally, may function as a substrate receptor for CUL4-DDB1 E3 ubiquitin-protein ligase complex. The chain is DDB1- and CUL4-associated factor 4 (DCAF4) from Homo sapiens (Human).